Consider the following 190-residue polypeptide: Small ribosomal subunit protein eS7A (190 aa).

Serine 2 carries the post-translational modification N-acetylserine. Residues lysine 83, lysine 84, and lysine 124 each participate in a glycyl lysine isopeptide (Lys-Gly) (interchain with G-Cter in ubiquitin) cross-link.

Belongs to the eukaryotic ribosomal protein eS7 family. Component of the small ribosomal subunit (SSU). Mature yeast ribosomes consist of a small (40S) and a large (60S) subunit. The 40S small subunit contains 1 molecule of ribosomal RNA (18S rRNA) and 33 different proteins (encoded by 57 genes). The large 60S subunit contains 3 rRNA molecules (25S, 5.8S and 5S rRNA) and 46 different proteins (encoded by 81 genes). Interacts with snoRNA U3. uS11 interacts with MPP10. Component of the ribosomal small subunit (SSU) processome composed of at least 40 protein subunits and snoRNA U3. In terms of processing, N-terminally acetylated by acetyltransferase NatA. Post-translationally, ubiquitinated at Lys-83 and Lys-84 in response to stalled ribosomes, leading to activation of the No-Go Decay (NGD) pathway: first monoubiquitinated by MOT2/NOT4, followed by formation by HEL2 of 'Lys-63'-linked polyubiquitin chains on monoubiquitin.

It is found in the cytoplasm. The protein localises to the nucleus. It localises to the nucleolus. Functionally, component of the ribosome, a large ribonucleoprotein complex responsible for the synthesis of proteins in the cell. The small ribosomal subunit (SSU) binds messenger RNAs (mRNAs) and translates the encoded message by selecting cognate aminoacyl-transfer RNA (tRNA) molecules. The large subunit (LSU) contains the ribosomal catalytic site termed the peptidyl transferase center (PTC), which catalyzes the formation of peptide bonds, thereby polymerizing the amino acids delivered by tRNAs into a polypeptide chain. The nascent polypeptides leave the ribosome through a tunnel in the LSU and interact with protein factors that function in enzymatic processing, targeting, and the membrane insertion of nascent chains at the exit of the ribosomal tunnel. eS7 is involved in nucleolar processing of pre-18S ribosomal RNA and ribosome assembly. The chain is Small ribosomal subunit protein eS7A from Saccharomyces cerevisiae (strain ATCC 204508 / S288c) (Baker's yeast).